Consider the following 118-residue polypeptide: Large ribosomal subunit protein bL19 (118 aa).

Belongs to the bacterial ribosomal protein bL19 family.

This protein is located at the 30S-50S ribosomal subunit interface and may play a role in the structure and function of the aminoacyl-tRNA binding site. This is Large ribosomal subunit protein bL19 from Wolinella succinogenes (strain ATCC 29543 / DSM 1740 / CCUG 13145 / JCM 31913 / LMG 7466 / NCTC 11488 / FDC 602W) (Vibrio succinogenes).